The primary structure comprises 195 residues: Ethylene-responsive transcription factor ERF018 (195 aa).

The span at 1-13 shows a compositional bias: basic and acidic residues; it reads MVKQAMKEEEKKR. A disordered region spans residues 1–22; it reads MVKQAMKEEEKKRNTAMQSKYK. Residues 20–77 constitute a DNA-binding region (AP2/ERF); it reads KYKGVRKRKWGKWVSEIRLPHSRERIWLGSYDTPEKAARAFDAAQFCLRGGDANFNFP.

Belongs to the AP2/ERF transcription factor family. ERF subfamily.

It is found in the nucleus. Probably acts as a transcriptional activator. Binds to the GCC-box pathogenesis-related promoter element. May be involved in the regulation of gene expression by stress factors and by components of stress signal transduction pathways. This is Ethylene-responsive transcription factor ERF018 (ERF018) from Arabidopsis thaliana (Mouse-ear cress).